We begin with the raw amino-acid sequence, 32 residues long: Photosystem II reaction center protein Z (32 aa).

Residues 12 to 32 (IGSAAWAGLVLLVGTLNYLVI) form a helical membrane-spanning segment.

The protein belongs to the PsbZ family. PSII is composed of 1 copy each of membrane proteins PsbA, PsbB, PsbC, PsbD, PsbE, PsbF, PsbH, PsbI, PsbJ, PsbK, PsbL, PsbM, PsbT, PsbY, PsbZ, Psb30/Ycf12, at least 3 peripheral proteins of the oxygen-evolving complex and a large number of cofactors. It forms dimeric complexes.

It localises to the plastid. Its subcellular location is the chloroplast thylakoid membrane. In terms of biological role, may control the interaction of photosystem II (PSII) cores with the light-harvesting antenna, regulates electron flow through the 2 photosystem reaction centers. PSII is a light-driven water plastoquinone oxidoreductase, using light energy to abstract electrons from H(2)O, generating a proton gradient subsequently used for ATP formation. The chain is Photosystem II reaction center protein Z from Euglena anabaena (Euglenaria anabaena).